Consider the following 342-residue polypeptide: Polycomb group RING finger protein 2 (342 aa).

The segment at 18–57 (CALCGGYFIDATTIVECLHSFCKTCIVRYLETNKYCPMCD) adopts an RING-type zinc-finger fold. Residues Lys-51 and Lys-88 each participate in a glycyl lysine isopeptide (Lys-Gly) (interchain with G-Cter in SUMO2) cross-link. The Nuclear localization signal signature appears at 81 to 95 (KLVPGLFKDEMKRRR). Residue Thr-237 is modified to Phosphothreonine; by PKA. The interval 237–342 (TLPTVPTPSE…MTVNGAPCPP (106 aa)) is disordered. Over residues 243–253 (TPSEGTNTSGA) the composition is skewed to polar residues. The segment covering 263-318 (APSPATLPATSSSLPSPATPSHGSPSSHGPPATHPTSPTPPSTAAGTTTATNGGTS) has biased composition (low complexity). Residues 319-328 (NCLQTPSSTS) show a composition bias toward polar residues. Residue Thr-334 is modified to Phosphothreonine; by PKA.

Exists as both a monomer and homodimer. Component of a PRC1-like complex. Interacts with CBX8, RING1 and RNF2. Interacts with CBX7. Interacts with PHC2. In terms of processing, phosphorylated. Homodimer formation is regulated by phosphorylation with only unphosphorylated proteins forming homodimers. In terms of tissue distribution, expressed in embryonic stem cells. Expressed in a variety of tumor cells and in neural tissues.

Its subcellular location is the nucleus. Transcriptional repressor. Binds specifically to the DNA sequence 5'-GACTNGACT-3'. Has tumor suppressor activity. May play a role in control of cell proliferation and/or neural cell development. Regulates proliferation of early T progenitor cells by maintaining expression of HES1. Also plays a role in antero-posterior specification of the axial skeleton and negative regulation of the self-renewal activity of hematopoietic stem cells. Component of a Polycomb group (PcG) multiprotein PRC1-like complex, a complex class required to maintain the transcriptionally repressive state of many genes, including Hox genes, throughout development. PcG PRC1 complex acts via chromatin remodeling and modification of histones; it mediates monoubiquitination of histone H2A 'Lys-119', rendering chromatin heritably changed in its expressibility. Within the PRC1-like complex, regulates RNF2 ubiquitin ligase activity. The sequence is that of Polycomb group RING finger protein 2 (Pcgf2) from Mus musculus (Mouse).